The following is a 227-amino-acid chain: Probable methylthioribulose-1-phosphate dehydratase (227 aa).

A substrate-binding site is contributed by Cys87. Zn(2+) contacts are provided by His105 and His107. Residue Glu129 is the Proton donor/acceptor of the active site. His185 lines the Zn(2+) pocket.

The protein belongs to the aldolase class II family. MtnB subfamily. Requires Zn(2+) as cofactor.

The protein localises to the cytoplasm. It catalyses the reaction 5-(methylsulfanyl)-D-ribulose 1-phosphate = 5-methylsulfanyl-2,3-dioxopentyl phosphate + H2O. Its pathway is amino-acid biosynthesis; L-methionine biosynthesis via salvage pathway; L-methionine from S-methyl-5-thio-alpha-D-ribose 1-phosphate: step 2/6. Its function is as follows. Catalyzes the dehydration of methylthioribulose-1-phosphate (MTRu-1-P) into 2,3-diketo-5-methylthiopentyl-1-phosphate (DK-MTP-1-P). This Drosophila melanogaster (Fruit fly) protein is Probable methylthioribulose-1-phosphate dehydratase.